We begin with the raw amino-acid sequence, 69 residues long: Conotoxin AbVIF (69 aa).

Residues 1-17 (VLIIAVLFLTACQLTTA) form the signal peptide. A propeptide spanning residues 18 to 40 (ETSSRGKQKHRALRSTDKNSRMS) is cleaved from the precursor. The segment at 20–41 (SSRGKQKHRALRSTDKNSRMSK) is disordered. Disulfide bonds link C43–C57, C50–C61, and C56–C68.

Belongs to the conotoxin O1 superfamily. In terms of tissue distribution, expressed by the venom duct.

It is found in the secreted. The protein is Conotoxin AbVIF of Conus abbreviatus (Abbreviated cone).